The sequence spans 110 residues: Protein RALF-like 19 (110 aa).

The first 23 residues, 1–23 (MGIKILLILGLLTLAVVAESANA), serve as a signal peptide directing secretion. The propeptide at 24-58 (TWTLTKSCVNGQGCIGEDGELDYLMDSETNRRQLA) is removed in mature form. Intrachain disulfides connect Cys76-Cys86 and Cys99-Cys105.

The protein belongs to the plant rapid alkalinization factor (RALF) family. Proteolytically cleaved, probably by S1P, a subtilisin-like serine protease (subtilase).

It is found in the secreted. Functionally, cell signaling peptide that may regulate plant stress, growth, and development. Mediates a rapid alkalinization of extracellular space by mediating a transient increase in the cytoplasmic Ca(2+) concentration leading to a calcium-dependent signaling events through a cell surface receptor and a concomitant activation of some intracellular mitogen-activated protein kinases. The chain is Protein RALF-like 19 (RALFL19) from Arabidopsis thaliana (Mouse-ear cress).